Reading from the N-terminus, the 550-residue chain is Invertase (550 aa).

A signal peptide spans 1-22 (MIQLSPLLLLPLFSVFNSIADA). Substrate-binding positions include 39–42 (WMND), Gln-60, and 103–104 (FS). The active site involves Asp-42. N-linked (GlcNAc...) asparagine glycans are attached at residues Asn-112, Asn-113, Asn-119, and Asn-165. 170-171 (RD) is a substrate binding site. N-linked (GlcNAc...) asparagine glycosylation is present at Asn-211. Glu-223 provides a ligand contact to substrate. Asn-237 carries N-linked (GlcNAc...) asparagine glycosylation. Trp-313 contacts substrate. Asn-333, Asn-364, Asn-398, and Asn-420 each carry an N-linked (GlcNAc...) asparagine glycan.

It belongs to the glycosyl hydrolase 32 family.

It carries out the reaction Hydrolysis of terminal non-reducing beta-D-fructofuranoside residues in beta-D-fructofuranosides.. In Wickerhamomyces anomalus (Yeast), this protein is Invertase (INV1).